The sequence spans 476 residues: Proline--tRNA ligase 2 (476 aa).

It belongs to the class-II aminoacyl-tRNA synthetase family. ProS type 3 subfamily. As to quaternary structure, homodimer.

It localises to the cytoplasm. The catalysed reaction is tRNA(Pro) + L-proline + ATP = L-prolyl-tRNA(Pro) + AMP + diphosphate. In terms of biological role, catalyzes the attachment of proline to tRNA(Pro) in a two-step reaction: proline is first activated by ATP to form Pro-AMP and then transferred to the acceptor end of tRNA(Pro). This Bacillus cereus (strain ZK / E33L) protein is Proline--tRNA ligase 2.